The primary structure comprises 230 residues: 3,4-dihydroxy-2-butanone 4-phosphate synthase (230 aa).

D-ribulose 5-phosphate contacts are provided by residues 42–43 (RE), Asp47, 155–159 (RRGHT), and Glu179. A Mg(2+)-binding site is contributed by Glu43. His158 is a binding site for Mg(2+).

Belongs to the DHBP synthase family. As to quaternary structure, homodimer. The cofactor is Mg(2+). Mn(2+) serves as cofactor.

The catalysed reaction is D-ribulose 5-phosphate = (2S)-2-hydroxy-3-oxobutyl phosphate + formate + H(+). It participates in cofactor biosynthesis; riboflavin biosynthesis; 2-hydroxy-3-oxobutyl phosphate from D-ribulose 5-phosphate: step 1/1. Its function is as follows. Catalyzes the conversion of D-ribulose 5-phosphate to formate and 3,4-dihydroxy-2-butanone 4-phosphate. The protein is 3,4-dihydroxy-2-butanone 4-phosphate synthase of Bordetella bronchiseptica (strain ATCC BAA-588 / NCTC 13252 / RB50) (Alcaligenes bronchisepticus).